The chain runs to 287 residues: Elongation factor Ts (287 aa).

Residues 80–83 form an involved in Mg(2+) ion dislocation from EF-Tu region; that stretch reads TDFL.

The protein belongs to the EF-Ts family.

It localises to the cytoplasm. Functionally, associates with the EF-Tu.GDP complex and induces the exchange of GDP to GTP. It remains bound to the aminoacyl-tRNA.EF-Tu.GTP complex up to the GTP hydrolysis stage on the ribosome. This Pseudomonas fluorescens (strain SBW25) protein is Elongation factor Ts.